We begin with the raw amino-acid sequence, 1105 residues long: SWI/SNF complex subunit SMARCC1 (1105 aa).

Ala-2 is modified (N-acetylalanine). A marR-like, BRCT and chromo domains module region spans residues 28 to 302; that stretch reads LAVYRRKDGG…PVSFRQRIST (275 aa). The 127-residue stretch at 38–164 folds into the MarR-like domain; that stretch reads PATKFWESPE…IEKTLVQNNC (127 aa). Residues 168-211 form the BRCT; N-terminus domain; the sequence is PNIYLIPDIDLKLANKLKDIIKRHQGTFTDEKSKASHHIYPYSS. Residue Lys-179 forms a Glycyl lysine isopeptide (Lys-Gly) (interchain with G-Cter in SUMO2) linkage. The region spanning 217 to 245 is the Chromo domain; the sequence is EWLRPVMRKEKQVLVHWGFYPDSYDTWVH. The region spanning 261 to 285 is the BRCT; C-terminus domain; it reads KPWKVHVKWILDTDIFNEWMNEEDY. A disordered region spans residues 296–439; that stretch reads FRQRISTKNE…DQSRSVDLGE (144 aa). The span at 302–318 shows a compositional bias: basic and acidic residues; sequence TKNEEPVRSPERRDRKA. A phosphoserine mark is found at Ser-310, Ser-328, and Ser-330. Phosphothreonine is present on Thr-335. N6-acetyllysine occurs at positions 345 and 346. Residue Ser-350 is modified to Phosphoserine. Position 354 is an N6-acetyllysine (Lys-354). Ser-357 carries the post-translational modification Phosphoserine. N6-acetyllysine; alternate is present on Lys-359. Lys-359 participates in a covalent cross-link: Glycyl lysine isopeptide (Lys-Gly) (interchain with G-Cter in SUMO2); alternate. Position 398 is a phosphothreonine (Thr-398). Positions 449-546 constitute an SWIRM domain; sequence IIIPSYASWF…YQVDPESRPM (98 aa). Ser-573 is subject to Phosphoserine. A Glycyl lysine isopeptide (Lys-Gly) (interchain with G-Cter in SUMO2) cross-link involves residue Lys-592. The SANT domain maps to 618–669; the sequence is SAGREWTEQETLLLLEALEMYKDDWNKVSEHVGSRTQDECILHFLRLPIEDP. Lys-739 participates in a covalent cross-link: Glycyl lysine isopeptide (Lys-Gly) (interchain with G-Cter in SUMO2). Residues 745–860 are disordered; the sequence is ARASGKVDPT…DTGKKKVEHE (116 aa). Over residues 776-785 the composition is skewed to acidic residues; it reads AEEEKMEADP. The segment covering 789-860 has biased composition (basic and acidic residues); that stretch reads QPEKAENKVE…DTGKKKVEHE (72 aa). Residue Lys-796 forms a Glycyl lysine isopeptide (Lys-Gly) (interchain with G-Cter in SUMO2) linkage. Ser-822 and Ser-825 each carry phosphoserine. Glycyl lysine isopeptide (Lys-Gly) (interchain with G-Cter in SUMO2) cross-links involve residues Lys-829 and Lys-856. Positions 914–946 form a coiled coil; sequence FEELETIMDREKEALEQQRQQLLTERQNFHMEQ. Position 948 is an N6-acetyllysine (Lys-948). Disordered stretches follow at residues 956 to 1028 and 1041 to 1105; these read QQME…PGQH and IHPS…SAAP. Over residues 957-993 the composition is skewed to low complexity; that stretch reads QMEQQQHGQNPQQAHQHSGGPGLAPLGAAGHPGMMPH. Composition is skewed to pro residues over residues 994-1017 and 1048-1057; these read QQPPPYPLMHHQMPPPHPPQPGQI and PTPPGMPPMP. Arg-1064 carries the post-translational modification Asymmetric dimethylarginine. Residues 1073–1105 are compositionally biased toward pro residues; sequence MYPPPPQQQPPPPPPADGVPPPPAPGPPASAAP.

Belongs to the SMARCC family. As to quaternary structure, component of the multiprotein chromatin-remodeling complexes SWI/SNF: SWI/SNF-A (BAF), SWI/SNF-B (PBAF) and related complexes. The canonical complex contains a catalytic subunit (either SMARCA4/BRG1/BAF190A or SMARCA2/BRM/BAF190B) and at least SMARCE1, ACTL6A/BAF53, SMARCC1/BAF155, SMARCC2/BAF170, and SMARCB1/SNF5/BAF47. Other subunits specific to each of the complexes may also be present permitting several possible combinations developmentally and tissue specific. Component of the BAF complex, which includes at least actin (ACTB), ARID1A/BAF250A, ARID1B/BAF250B, SMARCA2/BRM, SMARCA4/BRG1, ACTL6A/BAF53, ACTL6B/BAF53B, SMARCE1/BAF57, SMARCC1/BAF155, SMARCC2/BAF170, SMARCB1/SNF5/INI1, and one or more SMARCD1/BAF60A, SMARCD2/BAF60B, or SMARCD3/BAF60C. In muscle cells, the BAF complex also contains DPF3. Component of neural progenitors-specific chromatin remodeling complex (npBAF complex) composed of at least, ARID1A/BAF250A or ARID1B/BAF250B, SMARCD1/BAF60A, SMARCD3/BAF60C, SMARCA2/BRM/BAF190B, SMARCA4/BRG1/BAF190A, SMARCB1/BAF47, SMARCC1/BAF155, SMARCE1/BAF57, SMARCC2/BAF170, PHF10/BAF45A, ACTL6A/BAF53A and actin. Component of neuron-specific chromatin remodeling complex (nBAF complex) composed of at least, ARID1A/BAF250A or ARID1B/BAF250B, SMARCD1/BAF60A, SMARCD3/BAF60C, SMARCA2/BRM/BAF190B, SMARCA4/BRG1/BAF190A, SMARCB1/BAF47, SMARCC1/BAF155, SMARCE1/BAF57, SMARCC2/BAF170, DPF1/BAF45B, DPF3/BAF45C, ACTL6B/BAF53B and actin. Component of the SWI/SNF-B (PBAF) chromatin remodeling complex, at least composed of SMARCA4/BRG1, SMARCB1/BAF47/SNF5, ACTL6A/BAF53A or ACTL6B/BAF53B, SMARCE1/BAF57, SMARCD1/BAF60A, SMARCD2/BAF60B, perhaps SMARCD3/BAF60C, SMARCC1/BAF155, SMARCC2/BAF170, PBRM1/BAF180, ARID2/BAF200 and actin. Component of SWI/SNF (GBAF) subcomplex, which includes at least BICRA or BICRAL (mutually exclusive), BRD9, SS18, SMARCA2/BRM, SMARCA4/BRG1/BAF190A, ACTL6A/BAF53, SMARCC1/BAF155, and SMARCD1/BAF60A. May also interact with the SIN3A histone deacetylase transcription repressor complex in conjunction with SMARCA2 and SMARCA4. The minimal complex composed of SMARCC1 and SMARCA4 seems to be able to associate with cyclin such as CCNE1 or transcription factors such as KLF1 or GATA1. Interacts with NR3C1 and SMARD1. Interacts with TRIP12; leading to disrupt interaction between TRIP12 and SMARCE1 and prevent SMARCE1 ubiquitination. Interacts with CEBPB (when not methylated). Interacts with KDM6B. Interacts with MKKS; the interaction takes place predominantly in the cytoplasm and may modulate SMARCC1 location. Interacts with DPF2. Interacts with PRDM1/BLIMP1. Interacts with DPF3a (isoform 2 of DPF3/BAF45C) and with HDGFL2 in a DPF3a-dependent manner. Phosphorylated on undefined residues at the G2/M transition by ERK1 and other kinases. This may contribute to cell cycle specific inactivation of remodeling complexes containing the phosphorylated protein. Expressed in brain, heart, muscle, placenta, lung, liver, muscle, kidney and pancreas.

The protein localises to the nucleus. The protein resides in the cytoplasm. Involved in transcriptional activation and repression of select genes by chromatin remodeling (alteration of DNA-nucleosome topology). Component of SWI/SNF chromatin remodeling complexes that carry out key enzymatic activities, changing chromatin structure by altering DNA-histone contacts within a nucleosome in an ATP-dependent manner. May stimulate the ATPase activity of the catalytic subunit of the complex. Belongs to the neural progenitors-specific chromatin remodeling complex (npBAF complex) and the neuron-specific chromatin remodeling complex (nBAF complex). During neural development a switch from a stem/progenitor to a postmitotic chromatin remodeling mechanism occurs as neurons exit the cell cycle and become committed to their adult state. The transition from proliferating neural stem/progenitor cells to postmitotic neurons requires a switch in subunit composition of the npBAF and nBAF complexes. As neural progenitors exit mitosis and differentiate into neurons, npBAF complexes which contain ACTL6A/BAF53A and PHF10/BAF45A, are exchanged for homologous alternative ACTL6B/BAF53B and DPF1/BAF45B or DPF3/BAF45C subunits in neuron-specific complexes (nBAF). The npBAF complex is essential for the self-renewal/proliferative capacity of the multipotent neural stem cells. The nBAF complex along with CREST plays a role regulating the activity of genes essential for dendrite growth. The polypeptide is SWI/SNF complex subunit SMARCC1 (Homo sapiens (Human)).